The chain runs to 428 residues: MSAIVDIVGREILDSRGNPTVECDVLLESGVMGRAAVPSGASTGSREAIELRDGDKSRYLGKGVLKAVGYINNEISEAVLGLDASEQAFLDRTLIELDGTENKSRLGANAMLAVSMAVARAAAEEAGLPLYRYFGGMAAVQMPVPMMNVINGGEHANNNLDLQELMIIPLGAPSFREALRYGAEVFHALKKILHDKGISTAVGDEGGFAPNVPGGHEAAIQMILEAIDKAGYVAGEQIALGLDCAASEFYKDGKYELSGEGLSLSAQEWTDMLATWVDKYPIISIEDGMAEGDWDGWKILTDRLGKNVQIVGDDLFVTNTKILKEGIDKGIANSILIKINQIGTLTETFAAIEMAKRAGYTAVISHRSGETEDSTIADIAVGTNAGQIKTGSLSRSDRMAKYNQLLRIEEDLGEVASYPGRSAFYNLR.

Glutamine 163 contributes to the (2R)-2-phosphoglycerate binding site. The active-site Proton donor is the glutamate 205. The Mg(2+) site is built by aspartate 243, glutamate 286, and aspartate 313. (2R)-2-phosphoglycerate contacts are provided by lysine 338, arginine 367, serine 368, and lysine 389. Lysine 338 serves as the catalytic Proton acceptor.

The protein belongs to the enolase family. Mg(2+) is required as a cofactor.

It is found in the cytoplasm. The protein resides in the secreted. It localises to the cell surface. The catalysed reaction is (2R)-2-phosphoglycerate = phosphoenolpyruvate + H2O. It participates in carbohydrate degradation; glycolysis; pyruvate from D-glyceraldehyde 3-phosphate: step 4/5. Catalyzes the reversible conversion of 2-phosphoglycerate (2-PG) into phosphoenolpyruvate (PEP). It is essential for the degradation of carbohydrates via glycolysis. The protein is Enolase of Polaromonas naphthalenivorans (strain CJ2).